The chain runs to 314 residues: Small ribosomal subunit protein uS2c (314 aa).

The protein belongs to the universal ribosomal protein uS2 family.

It is found in the plastid. Its subcellular location is the chloroplast. In Stigeoclonium helveticum (Green alga), this protein is Small ribosomal subunit protein uS2c (rps2).